We begin with the raw amino-acid sequence, 153 residues long: Peritrophin-1 (153 aa).

The signal sequence occupies residues 1 to 17 (MKVSASLVLLLAAAVLA). 2 consecutive Chitin-binding type-2 domains span residues 18-79 (DDRC…QCAP) and 92-153 (SPNC…QCEE). Intrachain disulfides connect cysteine 56–cysteine 69 and cysteine 130–cysteine 143. Asparagine 63 carries an N-linked (GlcNAc...) asparagine glycan.

Glycosylated. As to expression, adult peritrophic membrane.

In terms of biological role, binds chitin but not cellulose. May be involved in the spatial organization of PM. This Anopheles gambiae (African malaria mosquito) protein is Peritrophin-1 (Aper1).